The following is a 26-amino-acid chain: uncharacterized protein (26 aa).

Polar residues predominate over residues 1–16 (MPEQKANCSPNGNITV). A disordered region spans residues 1–26 (MPEQKANCSPNGNITVDSMIMSLGSS).

This is an uncharacterized protein from Saccharomyces cerevisiae (strain ATCC 204508 / S288c) (Baker's yeast).